A 317-amino-acid chain; its full sequence is Olfactory receptor 2F1 (317 aa).

Residues 1 to 24 (MGTDNQTWVSEFILLGLSSDWDTR) are Extracellular-facing. Asn-5 carries N-linked (GlcNAc...) asparagine glycosylation. The chain crosses the membrane as a helical span at residues 25-48 (VSLFVLFLVMYVVTVLGNCLIVLL). At 49 to 57 (IRLDSRLHT) the chain is on the cytoplasmic side. Residues 58 to 79 (PMYFFLTNLSLVDVSYATSVVP) traverse the membrane as a helical segment. Residues 80–100 (QLLAHFLAEHKAIPFQSCAAQ) lie on the Extracellular side of the membrane. Cys-97 and Cys-189 are disulfide-bonded. Residues 101–120 (LFFSLALGGIEFVLLAVMAY) traverse the membrane as a helical segment. At 121-139 (DRYVAVCDALRYSAIMHGG) the chain is on the cytoplasmic side. A helical transmembrane segment spans residues 140-160 (LCARLAITSWVSGFISSPVQT). Over 161-200 (AITFQLPMCRNKFIDHISCELLAVVRLACVDTSSNEVTIM) the chain is Extracellular. The chain crosses the membrane as a helical span at residues 201-222 (VSSIVLLMTPFCLVLLSYIQII). Over 223-236 (STILKIQSREGRKK) the chain is Cytoplasmic. Residues 237-261 (AFHTCASHLTVVALCYGVAIFTYIQ) form a helical membrane-spanning segment. Residues 262 to 272 (PHSSPSVLQEK) lie on the Extracellular side of the membrane. Residues 273–292 (LFSVFYAILTPMLNPMIYSL) traverse the membrane as a helical segment. Over 293–317 (RNKEVKGAWQKLLWKFSGLTSKLAT) the chain is Cytoplasmic.

The protein belongs to the G-protein coupled receptor 1 family.

Its subcellular location is the cell membrane. Functionally, odorant receptor. The chain is Olfactory receptor 2F1 (OR2F1) from Homo sapiens (Human).